Here is a 765-residue protein sequence, read N- to C-terminus: Single-minded homolog 1 (765 aa).

The bHLH domain maps to 1–53 (MKEKSKNAARTRREKENSEFYELAKLLPLPSAITSQLDKASIIRLTTSYLKMR). PAS domains lie at 77–147 (GREL…QPYH) and 218–288 (PPSA…LVKG). Positions 292–335 (TKYYRFLAKQGGWVWVQSYATIVHNSRSSRPHCIVSVNYVLTDT) constitute a PAC domain. The 430-residue stretch at 336-765 (EYKGLQLSLD…GTSVIITNGS (430 aa)) folds into the Single-minded C-terminal domain. Composition is skewed to low complexity over residues 352 to 365 (PTFSYTSSSTPTIS) and 373 to 385 (SRLSSSKSKSRTS). Disordered regions lie at residues 352–428 (PTFS…PGSQ) and 527–560 (WDEDSVVSSPDPGSASESGDRYRTEQYQNSPHEP). The short motif at 368–387 (RKGAKSRLSSSKSKSRTSPY) is the Nuclear localization signal element. The segment covering 394-404 (HTERSESDHDS) has biased composition (basic and acidic residues).

As to quaternary structure, efficient DNA binding requires dimerization with another bHLH protein. Heterodimer; forms a heterodimer with ARNT, ARNT2. As to expression, detected in lung, skeletal muscle and kidney. During fetal development it is found in the CNS, developing kidney, mesodermal and endodermal tissues, including developing somites, mesonephric duct, and foregut.

The protein localises to the nucleus. Transcriptional factor that may have pleiotropic effects during embryogenesis and in the adult. The sequence is that of Single-minded homolog 1 (Sim1) from Mus musculus (Mouse).